A 352-amino-acid chain; its full sequence is Zinc finger CCCH domain-containing protein 42 (352 aa).

The RRM domain occupies 36 to 114; that stretch reads AYVYVGGIPF…RTIKVDHCGA (79 aa). 2 consecutive C3H1-type zinc fingers follow at residues 130-157 and 180-207; these read REAR…HDEK and REGR…HDEK. Positions 156-179 are disordered; the sequence is EKRAANTGWGHEEDRSSKWDHDKN. Basic and acidic residues-rich tracts occupy residues 210-230, 243-296, and 304-352; these read ATTG…DKLN, GDFK…RSGR, and RHND…DRRR. The disordered stretch occupies residues 210-352; that stretch reads ATTGWGHEED…DSLRREDRRR (143 aa). Residues 319–348 are a coiled coil; it reads RAQDWEKRKAESRRDRNDREEKDRDSLRRE.

The protein is Zinc finger CCCH domain-containing protein 42 of Arabidopsis thaliana (Mouse-ear cress).